A 273-amino-acid polypeptide reads, in one-letter code: Ribosomal RNA small subunit methyltransferase A (273 aa).

Asparagine 18, leucine 20, glycine 45, glutamate 66, aspartate 91, and asparagine 113 together coordinate S-adenosyl-L-methionine.

This sequence belongs to the class I-like SAM-binding methyltransferase superfamily. rRNA adenine N(6)-methyltransferase family. RsmA subfamily.

The protein resides in the cytoplasm. It catalyses the reaction adenosine(1518)/adenosine(1519) in 16S rRNA + 4 S-adenosyl-L-methionine = N(6)-dimethyladenosine(1518)/N(6)-dimethyladenosine(1519) in 16S rRNA + 4 S-adenosyl-L-homocysteine + 4 H(+). Functionally, specifically dimethylates two adjacent adenosines (A1518 and A1519) in the loop of a conserved hairpin near the 3'-end of 16S rRNA in the 30S particle. May play a critical role in biogenesis of 30S subunits. The protein is Ribosomal RNA small subunit methyltransferase A of Citrobacter koseri (strain ATCC BAA-895 / CDC 4225-83 / SGSC4696).